We begin with the raw amino-acid sequence, 152 residues long: Aspartate carbamoyltransferase regulatory chain (152 aa).

C109, C114, C138, and C141 together coordinate Zn(2+).

Belongs to the PyrI family. As to quaternary structure, contains catalytic and regulatory chains. Requires Zn(2+) as cofactor.

Its function is as follows. Involved in allosteric regulation of aspartate carbamoyltransferase. The protein is Aspartate carbamoyltransferase regulatory chain of Proteus mirabilis (strain HI4320).